Consider the following 191-residue polypeptide: Protein DMP10 (191 aa).

A run of 4 helical transmembrane segments spans residues 15–35 (FANLLPTGTALIFETLLPSFS), 48–68 (LLTITLISFCAAACFFSSFTD), 114–134 (LSFVDFVHAFVSVIVFLALAV), and 158–178 (LMIKYFAVMVLTMASFFFAIF).

This sequence belongs to the plant DMP1 protein family. In terms of tissue distribution, restricted to flowers.

The protein localises to the membrane. Its function is as follows. Involved in membrane remodeling. The polypeptide is Protein DMP10 (Arabidopsis thaliana (Mouse-ear cress)).